Reading from the N-terminus, the 694-residue chain is Methionine--tRNA ligase (694 aa).

Residues 14–24 (PYANGPIHLGH) carry the 'HIGH' region motif. Positions 145, 148, 158, and 161 each coordinate Zn(2+). A 'KMSKS' region motif is present at residues 330–334 (KMSKS). Lysine 333 lines the ATP pocket. The interval 558 to 579 (SLQATAGQPEPHSQVRHAEHQQ) is disordered. Residues 593–694 (DFAKVDLRIA…EGAQPGMKVK (102 aa)) enclose the tRNA-binding domain.

The protein belongs to the class-I aminoacyl-tRNA synthetase family. MetG type 1 subfamily. In terms of assembly, homodimer. Zn(2+) is required as a cofactor.

The protein resides in the cytoplasm. It catalyses the reaction tRNA(Met) + L-methionine + ATP = L-methionyl-tRNA(Met) + AMP + diphosphate. Functionally, is required not only for elongation of protein synthesis but also for the initiation of all mRNA translation through initiator tRNA(fMet) aminoacylation. In Methylococcus capsulatus (strain ATCC 33009 / NCIMB 11132 / Bath), this protein is Methionine--tRNA ligase.